The primary structure comprises 834 residues: Translation initiation factor IF-2 (834 aa).

The tract at residues 1 to 247 (MTEEKKFSGS…STPATVRKEQ (247 aa)) is disordered. Residues 45 to 101 (GGSRPSRPARPNNNNQNRPNNGGQSQNRNNQNRSNTSTGGQNRSNNGGNRNNRPGSR) show a composition bias toward low complexity. Positions 109 to 125 (PMIREKKNWSTKPREGQ) are enriched in basic and acidic residues. Low complexity-rich tracts occupy residues 149-165 (ASAA…ATKP) and 173-201 (ATKP…SARN). The span at 224-233 (GSKKSRRIAA) shows a compositional bias: basic residues. The tr-type G domain occupies 335-504 (SRPPVVTIMG…LLQAEVLELK (170 aa)). The segment at 344–351 (GHVDHGKT) is G1. 344 to 351 (GHVDHGKT) contacts GTP. The segment at 369–373 (GITQH) is G2. Residues 390-393 (DTPG) are G3. Residues 390-394 (DTPGH) and 444-447 (NKID) each bind GTP. Positions 444–447 (NKID) are G4. The G5 stretch occupies residues 480 to 482 (SAK).

Belongs to the TRAFAC class translation factor GTPase superfamily. Classic translation factor GTPase family. IF-2 subfamily.

It is found in the cytoplasm. Its function is as follows. One of the essential components for the initiation of protein synthesis. Protects formylmethionyl-tRNA from spontaneous hydrolysis and promotes its binding to the 30S ribosomal subunits. Also involved in the hydrolysis of GTP during the formation of the 70S ribosomal complex. The protein is Translation initiation factor IF-2 of Leuconostoc mesenteroides subsp. mesenteroides (strain ATCC 8293 / DSM 20343 / BCRC 11652 / CCM 1803 / JCM 6124 / NCDO 523 / NBRC 100496 / NCIMB 8023 / NCTC 12954 / NRRL B-1118 / 37Y).